The sequence spans 227 residues: Phosphoribosylformylglycinamidine synthase subunit PurQ (227 aa).

Positions Phe3 to Ala225 constitute a Glutamine amidotransferase type-1 domain. The active-site Nucleophile is Cys86. Residues His194 and Glu196 contribute to the active site.

Part of the FGAM synthase complex composed of 1 PurL, 1 PurQ and 2 PurS subunits.

The protein localises to the cytoplasm. It carries out the reaction N(2)-formyl-N(1)-(5-phospho-beta-D-ribosyl)glycinamide + L-glutamine + ATP + H2O = 2-formamido-N(1)-(5-O-phospho-beta-D-ribosyl)acetamidine + L-glutamate + ADP + phosphate + H(+). The enzyme catalyses L-glutamine + H2O = L-glutamate + NH4(+). It functions in the pathway purine metabolism; IMP biosynthesis via de novo pathway; 5-amino-1-(5-phospho-D-ribosyl)imidazole from N(2)-formyl-N(1)-(5-phospho-D-ribosyl)glycinamide: step 1/2. Its function is as follows. Part of the phosphoribosylformylglycinamidine synthase complex involved in the purines biosynthetic pathway. Catalyzes the ATP-dependent conversion of formylglycinamide ribonucleotide (FGAR) and glutamine to yield formylglycinamidine ribonucleotide (FGAM) and glutamate. The FGAM synthase complex is composed of three subunits. PurQ produces an ammonia molecule by converting glutamine to glutamate. PurL transfers the ammonia molecule to FGAR to form FGAM in an ATP-dependent manner. PurS interacts with PurQ and PurL and is thought to assist in the transfer of the ammonia molecule from PurQ to PurL. The sequence is that of Phosphoribosylformylglycinamidine synthase subunit PurQ from Bacillus licheniformis (strain ATCC 14580 / DSM 13 / JCM 2505 / CCUG 7422 / NBRC 12200 / NCIMB 9375 / NCTC 10341 / NRRL NRS-1264 / Gibson 46).